We begin with the raw amino-acid sequence, 255 residues long: Aspartate/glutamate leucyltransferase (255 aa).

The protein belongs to the R-transferase family. Bpt subfamily.

Its subcellular location is the cytoplasm. The catalysed reaction is N-terminal L-glutamyl-[protein] + L-leucyl-tRNA(Leu) = N-terminal L-leucyl-L-glutamyl-[protein] + tRNA(Leu) + H(+). It catalyses the reaction N-terminal L-aspartyl-[protein] + L-leucyl-tRNA(Leu) = N-terminal L-leucyl-L-aspartyl-[protein] + tRNA(Leu) + H(+). Functions in the N-end rule pathway of protein degradation where it conjugates Leu from its aminoacyl-tRNA to the N-termini of proteins containing an N-terminal aspartate or glutamate. The polypeptide is Aspartate/glutamate leucyltransferase (Leptospira borgpetersenii serovar Hardjo-bovis (strain JB197)).